A 126-amino-acid chain; its full sequence is Holo-[acyl-carrier-protein] synthase (126 aa).

D9 and E58 together coordinate Mg(2+).

It belongs to the P-Pant transferase superfamily. AcpS family. Mg(2+) serves as cofactor.

The protein resides in the cytoplasm. The catalysed reaction is apo-[ACP] + CoA = holo-[ACP] + adenosine 3',5'-bisphosphate + H(+). In terms of biological role, transfers the 4'-phosphopantetheine moiety from coenzyme A to a Ser of acyl-carrier-protein. This Salmonella agona (strain SL483) protein is Holo-[acyl-carrier-protein] synthase.